A 125-amino-acid chain; its full sequence is MPTISQLVRKPRAAKPLKSKVPALGNSPQKRGVCTRVYTTTPKKPNSALRKVARVRLTNGFEVSSYIGGEGHNLQEHSVVLIRGGRVKDLPGVRYHTVRGSLDTAGVKDRKQGRSKYGAKKPKSA.

The disordered stretch occupies residues 1-30 (MPTISQLVRKPRAAKPLKSKVPALGNSPQK). The segment covering 9-18 (RKPRAAKPLK) has biased composition (basic residues). D89 is subject to 3-methylthioaspartic acid. Residues 103 to 125 (DTAGVKDRKQGRSKYGAKKPKSA) form a disordered region. Residues 113-125 (GRSKYGAKKPKSA) are compositionally biased toward basic residues.

The protein belongs to the universal ribosomal protein uS12 family. Part of the 30S ribosomal subunit. Contacts proteins S8 and S17. May interact with IF1 in the 30S initiation complex.

With S4 and S5 plays an important role in translational accuracy. In terms of biological role, interacts with and stabilizes bases of the 16S rRNA that are involved in tRNA selection in the A site and with the mRNA backbone. Located at the interface of the 30S and 50S subunits, it traverses the body of the 30S subunit contacting proteins on the other side and probably holding the rRNA structure together. The combined cluster of proteins S8, S12 and S17 appears to hold together the shoulder and platform of the 30S subunit. This chain is Small ribosomal subunit protein uS12, found in Nitrosospira multiformis (strain ATCC 25196 / NCIMB 11849 / C 71).